A 123-amino-acid chain; its full sequence is cAMP-responsive element-binding protein-like 2 (123 aa).

Residues 1-24 form a disordered region; it reads MDDSKVVGGKVKKPGKRGRKPAKI. Positions 10 to 21 are enriched in basic residues; sequence KVKKPGKRGRKP. One can recognise a bZIP domain in the interval 23 to 86; it reads KIDLKAKLER…MAMDQGKIPS (64 aa). The basic motif stretch occupies residues 29–60; it reads KLERSRQSARECRARKKLRYQYLEELVSSRER. A leucine-zipper region spans residues 62-69; that stretch reads ICALREEL. Residues 93 to 123 are disordered; sequence TGEEQNKSQQNSSRHPKAGKTDANTNSLVGN. A compositionally biased stretch (polar residues) spans 114 to 123; the sequence is DANTNSLVGN.

Belongs to the bZIP family. ATF subfamily. In terms of assembly, interacts with CREB1; regulates CREB1 phosphorylation, stability and transcriptional activity. Post-translationally, phosphorylated by AMPK.

It localises to the nucleus. Its function is as follows. Probable regulator of CREB1 transcriptional activity which is involved in adipose cells differentiation. May also play a regulatory role in the cell cycle. This is cAMP-responsive element-binding protein-like 2 (Crebl2) from Rattus norvegicus (Rat).